The following is a 96-amino-acid chain: Co-chaperonin GroES (96 aa).

Residues 26 to 48 are disordered; the sequence is LLPGSAQEKPSQGEVLATGNGQI.

Belongs to the GroES chaperonin family. In terms of assembly, heptamer of 7 subunits arranged in a ring. Interacts with the chaperonin GroEL.

It is found in the cytoplasm. In terms of biological role, together with the chaperonin GroEL, plays an essential role in assisting protein folding. The GroEL-GroES system forms a nano-cage that allows encapsulation of the non-native substrate proteins and provides a physical environment optimized to promote and accelerate protein folding. GroES binds to the apical surface of the GroEL ring, thereby capping the opening of the GroEL channel. The protein is Co-chaperonin GroES of Psychrobacter arcticus (strain DSM 17307 / VKM B-2377 / 273-4).